Consider the following 140-residue polypeptide: Small ribosomal subunit protein uS12 (140 aa).

A disordered region spans residues 1–20 (MPTINQLVRKGRQSKVVKSD). D102 is subject to 3-methylthioaspartic acid. The disordered stretch occupies residues 121 to 140 (DGRMQGRSKYGTKRPKAAKK). Over residues 130 to 140 (YGTKRPKAAKK) the composition is skewed to basic residues.

This sequence belongs to the universal ribosomal protein uS12 family. In terms of assembly, part of the 30S ribosomal subunit. Contacts proteins S8 and S17. May interact with IF1 in the 30S initiation complex.

With S4 and S5 plays an important role in translational accuracy. In terms of biological role, interacts with and stabilizes bases of the 16S rRNA that are involved in tRNA selection in the A site and with the mRNA backbone. Located at the interface of the 30S and 50S subunits, it traverses the body of the 30S subunit contacting proteins on the other side and probably holding the rRNA structure together. The combined cluster of proteins S8, S12 and S17 appears to hold together the shoulder and platform of the 30S subunit. This Exiguobacterium sibiricum (strain DSM 17290 / CCUG 55495 / CIP 109462 / JCM 13490 / 255-15) protein is Small ribosomal subunit protein uS12.